The primary structure comprises 502 residues: Lysine--tRNA ligase (502 aa).

Mg(2+) is bound by residues Glu-412 and Glu-419.

It belongs to the class-II aminoacyl-tRNA synthetase family. In terms of assembly, homodimer. Requires Mg(2+) as cofactor.

It is found in the cytoplasm. The enzyme catalyses tRNA(Lys) + L-lysine + ATP = L-lysyl-tRNA(Lys) + AMP + diphosphate. In Histophilus somni (strain 2336) (Haemophilus somnus), this protein is Lysine--tRNA ligase.